The primary structure comprises 372 residues: MRDKVSGARRWVVKIGSALLTADGRGLDQAAMAVWVDQMVALRAAGVELVLVSSGAVAAGMSRLGWASRPKAVHELQAAAAVGQMGLIRAWESSFARCDQQTAQILVTHDDLSDRKRYLNARSTLRTLIDLGVVPVINENDTVVTDEIRFGDNDTLAALVANLVEADLLVILTDRDGMFDADPRHNPEANLISEARADDPALDAVAGGTGGALGRGGMQTKLRAARLAARSGAHTVIVGGRIEQVLSRLKAGERLGTLLAPECNRHAARKQWLAGHLQTRGTLTLDEGAVLALRQGNRSLLPVGVRAVQGAFRRGEMVVCVGPQGAEVARGLVNYSAAEAQRILGRPSDEIEKLLGYVDEPELIHRDNMILV.

ATP is bound at residue lysine 14. Substrate is bound by residues serine 54, aspartate 141, and asparagine 153. Residue 173–174 participates in ATP binding; that stretch reads TD. Residues 280–358 form the PUA domain; that stretch reads RGTLTLDEGA…DEIEKLLGYV (79 aa).

The protein belongs to the glutamate 5-kinase family.

The protein localises to the cytoplasm. The enzyme catalyses L-glutamate + ATP = L-glutamyl 5-phosphate + ADP. It participates in amino-acid biosynthesis; L-proline biosynthesis; L-glutamate 5-semialdehyde from L-glutamate: step 1/2. Functionally, catalyzes the transfer of a phosphate group to glutamate to form L-glutamate 5-phosphate. This is Glutamate 5-kinase from Stutzerimonas stutzeri (strain A1501) (Pseudomonas stutzeri).